The following is a 117-amino-acid chain: SGSCTLETCWEKMPSFREVGSRLMEQYKGSAKVTGGNDGGTLIPEDSTVKPPSELDLVYSMDSPDFCEPNPRTVHSARRGVGCNSTSMDVGGCDILCCGRGYVEETVIFQVNCRCRF.

S1 carries the O-palmitoleoyl serine; by PORCN lipid modification. C83 and C98 form a disulfide bridge. N-linked (GlcNAc...) asparagine glycosylation is present at N84.

This sequence belongs to the Wnt family. In terms of processing, palmitoleoylation is required for efficient binding to frizzled receptors. Depalmitoleoylation leads to Wnt signaling pathway inhibition.

Its subcellular location is the secreted. It localises to the extracellular space. It is found in the extracellular matrix. Functionally, ligand for members of the frizzled family of seven transmembrane receptors. Probable developmental protein. May be a signaling molecule which affects the development of discrete regions of tissues. Is likely to signal over only few cell diameters. The polypeptide is Protein Wnt-6 (WNT-6) (Evasterias troschelii (Mottled sea star)).